Reading from the N-terminus, the 471-residue chain is Putative multidrug resistance protein MdtD (471 aa).

The next 13 membrane-spanning stretches (helical) occupy residues 12–32 (LWIVAFGFFMQSLDTTIVNTA), 49–69 (MVIVSYVLTVAVMLPASGWMA), 72–92 (IGVRNIFFTAIVLFTLGSLFC), 101–123 (LVMSRVLQGVGGAMMVPVGRLTV), 138–158 (FVTLPGQVGPLLGPALGGILV), 165–185 (WIFLINLPVGIVGAIATLWLM), 195–215 (FDIFGFVLLAAGMATLTLALD), 220–240 (LGISTLTLCLLIVIGIVSILW), 265–285 (IGLFGSFVGRLGSGMLPFMTP), 286–306 (VFLQIGLGFSPFHAGLMMIPM), 342–362 (LVFMAVALMGWYYVLPLVLFF), 393–413 (LLSMIMQLSMSVGVTVAGLLL), and 431–451 (VFLYTYLSMAVIIALPALIFA).

The protein belongs to the major facilitator superfamily. TCR/Tet family.

It is found in the cell inner membrane. This chain is Putative multidrug resistance protein MdtD, found in Enterobacter sp. (strain 638).